Here is a 728-residue protein sequence, read N- to C-terminus: Catalase-peroxidase 1 (728 aa).

The segment at residues 91-218 is a cross-link (tryptophyl-tyrosyl-methioninium (Trp-Tyr) (with M-244)); it reads WHSAGTYRTA…LAAVQMGLIY (128 aa). The active-site Proton acceptor is His92. Residues 218–244 constitute a cross-link (tryptophyl-tyrosyl-methioninium (Tyr-Met) (with W-91)); it reads YVNPEGPDGNPDPVAAAHDIRETFARM. Position 259 (His259) interacts with heme b.

The protein belongs to the peroxidase family. Peroxidase/catalase subfamily. Homodimer or homotetramer. Heme b is required as a cofactor. Formation of the three residue Trp-Tyr-Met cross-link is important for the catalase, but not the peroxidase activity of the enzyme.

It catalyses the reaction H2O2 + AH2 = A + 2 H2O. The catalysed reaction is 2 H2O2 = O2 + 2 H2O. Functionally, bifunctional enzyme with both catalase and broad-spectrum peroxidase activity. This is Catalase-peroxidase 1 from Burkholderia cenocepacia (strain ATCC BAA-245 / DSM 16553 / LMG 16656 / NCTC 13227 / J2315 / CF5610) (Burkholderia cepacia (strain J2315)).